A 149-amino-acid chain; its full sequence is Deoxyuridine 5'-triphosphate nucleotidohydrolase (149 aa).

Residues 66 to 68 (RSG), Asn-79, 83 to 85 (TID), and Lys-93 contribute to the substrate site.

This sequence belongs to the dUTPase family. Mg(2+) serves as cofactor.

The catalysed reaction is dUTP + H2O = dUMP + diphosphate + H(+). It functions in the pathway pyrimidine metabolism; dUMP biosynthesis; dUMP from dCTP (dUTP route): step 2/2. In terms of biological role, this enzyme is involved in nucleotide metabolism: it produces dUMP, the immediate precursor of thymidine nucleotides and it decreases the intracellular concentration of dUTP so that uracil cannot be incorporated into DNA. The chain is Deoxyuridine 5'-triphosphate nucleotidohydrolase from Corynebacterium glutamicum (strain ATCC 13032 / DSM 20300 / JCM 1318 / BCRC 11384 / CCUG 27702 / LMG 3730 / NBRC 12168 / NCIMB 10025 / NRRL B-2784 / 534).